The following is a 474-amino-acid chain: Protein nucleotidyltransferase YdiU (474 aa).

ATP-binding residues include Gly89, Gly91, Arg92, Lys112, Asp124, Gly125, Arg178, and Arg185. The active-site Proton acceptor is Asp262. Positions 263 and 272 each coordinate Mg(2+). ATP is bound at residue Asp272.

This sequence belongs to the SELO family. The cofactor is Mg(2+). Mn(2+) is required as a cofactor.

It catalyses the reaction L-seryl-[protein] + ATP = 3-O-(5'-adenylyl)-L-seryl-[protein] + diphosphate. It carries out the reaction L-threonyl-[protein] + ATP = 3-O-(5'-adenylyl)-L-threonyl-[protein] + diphosphate. The catalysed reaction is L-tyrosyl-[protein] + ATP = O-(5'-adenylyl)-L-tyrosyl-[protein] + diphosphate. The enzyme catalyses L-histidyl-[protein] + UTP = N(tele)-(5'-uridylyl)-L-histidyl-[protein] + diphosphate. It catalyses the reaction L-seryl-[protein] + UTP = O-(5'-uridylyl)-L-seryl-[protein] + diphosphate. It carries out the reaction L-tyrosyl-[protein] + UTP = O-(5'-uridylyl)-L-tyrosyl-[protein] + diphosphate. Its function is as follows. Nucleotidyltransferase involved in the post-translational modification of proteins. It can catalyze the addition of adenosine monophosphate (AMP) or uridine monophosphate (UMP) to a protein, resulting in modifications known as AMPylation and UMPylation. The protein is Protein nucleotidyltransferase YdiU of Trichodesmium erythraeum (strain IMS101).